Here is a 463-residue protein sequence, read N- to C-terminus: DNA-binding protein K10 (463 aa).

Positions 1–13 (MVSKNQFYQNWTM) are enriched in polar residues. The interval 1–304 (MVSKNQFYQN…RNGPGPGPMM (304 aa)) is disordered. The segment covering 14 to 50 (QSQQQHPHQMQQQFQQQQQPNLQHRNNQSNNNNCNNN) has biased composition (low complexity). The span at 85–94 (QMMFSSSQMP) shows a compositional bias: polar residues. 7 consecutive repeat copies span residues 87-94 (MFSSSQMP), 95-102 (SDPLYIDF), 103-110 (SSPPPGFK), 111-118 (HNQVGSPK), 119-126 (KKSMKGIK), 127-134 (QQQHPSPN), and 135-142 (QQQPPSPN). The tract at residues 87–142 (MFSSSQMPSDPLYIDFSSPPPGFKHNQVGSPKKKSMKGIKQQQHPSPNQQQPPSPN) is 7 X approximate tandem repeats. The span at 142-193 (NQQQHPSPNQQQHPSPNQQQHPNSNQQQHLSPNQQQGKMNNQNNNHMNQSQQ) shows a compositional bias: low complexity. Positions 194–214 (PFNNQMNGSDWQRHPGNNPNQ) are enriched in polar residues. Pro residues-rich tracts occupy residues 225-270 (GPPP…PPVP) and 282-291 (GGPPPPPPPL). The segment at residues 397–416 (DELFAQYKGQRDKFVSLYEA) is a DNA-binding region (H-T-H motif). Positions 426–463 (AATVKAKDAKSDKDKNAISSQSAAPKAGSAKDATIPNP) are disordered. The segment covering 430 to 441 (KAKDAKSDKDKN) has biased composition (basic and acidic residues).

As to quaternary structure, interacts (via N-terminus) with sqd; the interaction is direct and may be involved in localization of sqd to the oocyte during oogenesis.

It is found in the nucleus. Its function is as follows. May be involved in localization of sqd to the oocyte during oogenesis. The chain is DNA-binding protein K10 (fs(1)K10) from Drosophila melanogaster (Fruit fly).